The chain runs to 273 residues: Protein N-terminal and lysine N-methyltransferase EFM7 (273 aa).

A disordered region spans residues 1-32; sequence MSDIEDLASGGLFDEPKDFYKPEEQPGSDSYA. The span at 14–24 shows a compositional bias: basic and acidic residues; it reads DEPKDFYKPEE. S-adenosyl-L-methionine contacts are provided by residues Trp-65, 92–94, Asp-114, Trp-161, and Ser-183; that span reads GAG.

This sequence belongs to the class I-like SAM-binding methyltransferase superfamily. EFM7 family.

The protein resides in the cytoplasm. S-adenosyl-L-methionine-dependent protein methyltransferase that trimethylates the N-terminal glycine 'Gly-2' of elongation factor 1-alpha, before also catalyzing the mono- and dimethylation of 'Lys-3'. This chain is Protein N-terminal and lysine N-methyltransferase EFM7, found in Yarrowia lipolytica (strain CLIB 122 / E 150) (Yeast).